Reading from the N-terminus, the 700-residue chain is Elongation factor G 2 (700 aa).

The region spanning 8–290 (ERYRNIGISA…AVIDFLPSPV (283 aa)) is the tr-type G domain. Residues 17–24 (AHIDAGKT), 88–92 (DTPGH), and 142–145 (NKMD) contribute to the GTP site.

This sequence belongs to the TRAFAC class translation factor GTPase superfamily. Classic translation factor GTPase family. EF-G/EF-2 subfamily.

It localises to the cytoplasm. Functionally, catalyzes the GTP-dependent ribosomal translocation step during translation elongation. During this step, the ribosome changes from the pre-translocational (PRE) to the post-translocational (POST) state as the newly formed A-site-bound peptidyl-tRNA and P-site-bound deacylated tRNA move to the P and E sites, respectively. Catalyzes the coordinated movement of the two tRNA molecules, the mRNA and conformational changes in the ribosome. The protein is Elongation factor G 2 of Burkholderia mallei (strain ATCC 23344).